A 207-amino-acid chain; its full sequence is Uridine kinase (207 aa).

11–18 contacts ATP; the sequence is GGSGSGKT.

This sequence belongs to the uridine kinase family.

The protein localises to the cytoplasm. It carries out the reaction uridine + ATP = UMP + ADP + H(+). The enzyme catalyses cytidine + ATP = CMP + ADP + H(+). Its pathway is pyrimidine metabolism; CTP biosynthesis via salvage pathway; CTP from cytidine: step 1/3. It functions in the pathway pyrimidine metabolism; UMP biosynthesis via salvage pathway; UMP from uridine: step 1/1. In Staphylococcus epidermidis (strain ATCC 35984 / DSM 28319 / BCRC 17069 / CCUG 31568 / BM 3577 / RP62A), this protein is Uridine kinase.